A 901-amino-acid chain; its full sequence is HTH-type transcriptional regulator MalT (901 aa).

Ser39–Thr46 provides a ligand contact to ATP. The HTH luxR-type domain occupies Glu829–Leu894. A DNA-binding region (H-T-H motif) is located at residues Asn853–Arg872.

This sequence belongs to the MalT family. In terms of assembly, monomer in solution. Oligomerizes to an active state in the presence of the positive effectors ATP and maltotriose.

Activated by ATP and maltotriose, which are both required for DNA binding. Functionally, positively regulates the transcription of the maltose regulon whose gene products are responsible for uptake and catabolism of malto-oligosaccharides. Specifically binds to the promoter region of its target genes, recognizing a short DNA motif called the MalT box. The protein is HTH-type transcriptional regulator MalT of Salmonella heidelberg (strain SL476).